Here is a 307-residue protein sequence, read N- to C-terminus: Transcription initiation factor IIB (307 aa).

A TFIIB-type zinc finger spans residues 11–42; it reads FTEECPACGSAEIVFDEERGEYVCANCGLVTE. Residues C15, C18, C34, and C37 each contribute to the Zn(2+) site. The disordered stretch occupies residues 48-69; that stretch reads PGPEWRHFNPDQRQRRSRTGEP. The span at 50-69 shows a compositional bias: basic and acidic residues; the sequence is PEWRHFNPDQRQRRSRTGEP. 2 tandem repeats follow at residues 123–207 and 218–299.

This sequence belongs to the TFIIB family.

Its function is as follows. Stabilizes TBP binding to an archaeal box-A promoter. Also responsible for recruiting RNA polymerase II to the pre-initiation complex (DNA-TBP-TFIIB). The protein is Transcription initiation factor IIB of Methanopyrus kandleri (strain AV19 / DSM 6324 / JCM 9639 / NBRC 100938).